Reading from the N-terminus, the 898-residue chain is Sodium/hydrogen exchanger 5 (898 aa).

Residues 1–48 (MLSAALLLLPGLPLAGAGATEEPTQESGPLGEPPPGLALFRWQWHEVE) lie on the Cytoplasmic side of the membrane. Residues 49-69 (APYLVALWILVASLAKIVFHL) traverse the membrane as a helical segment. The Extracellular portion of the chain corresponds to 70–76 (SRKVTSL). The chain crosses the membrane as a helical span at residues 77-97 (VPESCLLILLGLVLGGIVLAV). Residues 98 to 106 (AKKAEYQLE) are Cytoplasmic-facing. Residues 107–127 (PGTFFLFLLPPIVLDSGYFMP) traverse the membrane as a helical segment. Residues 128–137 (SRLFFDNLGA) lie on the Extracellular side of the membrane. A helical membrane pass occupies residues 138–158 (ILTYAVVGTLWNAFTTGVALW). Residues 159 to 176 (GLQQAGLVAPRVQAGLLD) lie on the Cytoplasmic side of the membrane. The chain crosses the membrane as a helical span at residues 177–197 (FLLFGSLISAVDPVAVLAVFE). The Extracellular segment spans residues 198 to 203 (EVHVNQ). The chain crosses the membrane as a helical span at residues 204–224 (TLFIIIFGESLLNDAVTVVLY). Residues 225 to 249 (KVCNSFVEMGSANVQATDYLKGVAS) are Cytoplasmic-facing. A helical transmembrane segment spans residues 250–270 (LFVVSLGGAAVGLVFAFLLAL). Residues 271-279 (TTRFTKRVR) are Extracellular-facing. Residues 280–300 (IIEPLLVFLLAYAAYLTAEMA) form a helical membrane-spanning segment. Over 301–334 (SLSAILAVTMCGLGCKKYVEANISHKSRTAVKYT) the chain is Cytoplasmic. The chain crosses the membrane as a helical span at residues 335-355 (MKTLASCAETVIFMLLGISAV). At 356–363 (DSSKWAWD) the chain is on the extracellular side. Residues 364 to 384 (SGLVLGTLFFILFFRALGVVL) traverse the membrane as a helical segment. The Cytoplasmic portion of the chain corresponds to 385-401 (QTWALNQFRLVPLDKID). A helical transmembrane segment spans residues 402 to 422 (QVVMSYGGLRGAVAFALVILL). The Extracellular portion of the chain corresponds to 423–431 (DRTKVPAKD). Residues 432-452 (YFVATTIVVVFFTVIVQGLTI) form a helical membrane-spanning segment. At 453–898 (KPLVKWLRVK…CIQFNRGGRL (446 aa)) the chain is on the cytoplasmic side. Disordered regions lie at residues 660–693 (FTKSKPRPRKTSHKKKDGVANPEATNGKPPRDLG) and 826–866 (EEPQ…PQQE). The segment covering 663–675 (SKPRPRKTSHKKK) has biased composition (basic residues). The span at 857–866 (ESSADIPQQE) shows a compositional bias: polar residues.

This sequence belongs to the monovalent cation:proton antiporter 1 (CPA1) transporter (TC 2.A.36) family. As to quaternary structure, interacts with CHP1 and CHP2. Interacts with ARRB2; facilitates the endocytosis of SLC9A5 from the plasma membrane. Interacts with RACK1; this interaction positively regulates SLC9A5 activity and promote SLC9A5 localization to focal adhesions. Interacts with SCAMP2; this interaction regulates SLC9A5 cell-surface targeting and SLC9A5 activity. Phosphorylated by PRKAA2; promotes its accumulation at the cell surface. Phosphorylated by CSNK2A1 in a manner favoring its beta-arrestin binding and endocytosis. In terms of tissue distribution, highest expression level is detected in brain. Expressed in hippocampal neurons (at protein level).

Its subcellular location is the cell membrane. The protein localises to the recycling endosome membrane. It is found in the cell projection. It localises to the dendritic spine membrane. The protein resides in the synaptic cell membrane. Its subcellular location is the cell junction. The protein localises to the focal adhesion. The catalysed reaction is Na(+)(in) + H(+)(out) = Na(+)(out) + H(+)(in). In terms of biological role, plasma membrane Na(+)/H(+) antiporter. Mediates the electroneutral exchange of intracellular H(+) ions for extracellular Na(+) in 1:1 stoichiometry. Responsible for regulating intracellular pH homeostasis, in particular in neural tissues. Acts as a negative regulator of dendritic spine growth. Plays a role in postsynaptic remodeling and signaling. Can also contribute to organellar pH regulation, with consequences for receptor tyrosine kinase trafficking. This is Sodium/hydrogen exchanger 5 (Slc9a5) from Mus musculus (Mouse).